Reading from the N-terminus, the 132-residue chain is Small ribosomal subunit protein bS6 (132 aa).

This sequence belongs to the bacterial ribosomal protein bS6 family.

In terms of biological role, binds together with bS18 to 16S ribosomal RNA. The sequence is that of Small ribosomal subunit protein bS6 from Chlorobium chlorochromatii (strain CaD3).